The sequence spans 20 residues: Beta-1,3-glucan-binding protein 2 (20 aa).

Belongs to the insect beta-1,3-glucan binding protein family. Monomer.

It localises to the secreted. Involved in the recognition of invading microorganisms causing their aggregation. Activates the phenoloxidase cascade. Binds specifically to beta-1,3-glucan. Binds the A.niger cell wall component alpha-1,3-glucan, a fungal pathogen-associated molecular pattern (PAMP) that activates the host immune response. This chain is Beta-1,3-glucan-binding protein 2, found in Galleria mellonella (Greater wax moth).